Consider the following 251-residue polypeptide: NADPH-dependent oxidoreductase (251 aa).

Belongs to the flavin oxidoreductase frp family. It depends on FMN as a cofactor.

Functionally, reduces FMN, organic nitro compounds and disulfide DTNB. Involved in maintenance of the cellular redox state and the disulfide stress response. The sequence is that of NADPH-dependent oxidoreductase (nfrA) from Staphylococcus aureus (strain bovine RF122 / ET3-1).